The sequence spans 285 residues: Hydroxyethylthiazole kinase (285 aa).

Position 43 (Met43) interacts with substrate. Positions 119 and 172 each coordinate ATP. Gly199 contacts substrate.

It belongs to the Thz kinase family. The cofactor is Mg(2+).

It carries out the reaction 5-(2-hydroxyethyl)-4-methylthiazole + ATP = 4-methyl-5-(2-phosphooxyethyl)-thiazole + ADP + H(+). It functions in the pathway cofactor biosynthesis; thiamine diphosphate biosynthesis; 4-methyl-5-(2-phosphoethyl)-thiazole from 5-(2-hydroxyethyl)-4-methylthiazole: step 1/1. In terms of biological role, catalyzes the phosphorylation of the hydroxyl group of 4-methyl-5-beta-hydroxyethylthiazole (THZ). This chain is Hydroxyethylthiazole kinase, found in Desulfovibrio desulfuricans (strain ATCC 27774 / DSM 6949 / MB).